The sequence spans 428 residues: MTMKVKLLTTSVALALSMTAFSSNAVDFSGYFRSGVGVSQDGDMQTGNQSLVGRLGNESDTYTEIGIGQEVYNKDGKVFYVDSMFSMQSNGSNDYESTATVCDFDKKQCSEDATFALRQFNVKAKGLISAAPDAVVWAGKRFYQRHDLHIIDTKYWNISGAGAGIENLKAGPGAFSLAWIRSDGNDIDNSIVDNDLNVNFLDLRYAGWAPWEGAWTEAGVSYAMPNPTDEQKATGGKYDPENGVMLTAEMSQYFAGSGINEKLVLQYANKGLAQNMISQGGGWYDVWQLTDDAKGYRVILTGDIPLGDKFSVNHVFTYGKGEKLQEWHDNTELFSAVARGGYAWTDIMKTLVEAGTYESTKTWTSGAEDKSSGQKYTLAQAWSAGPSMFARPEIRVFASYLKDGEGESFNGGEDDSTWNFGVQAEAWW.

The first 25 residues, methionine 1–alanine 25, serve as a signal peptide directing secretion.

It belongs to the porin LamB (TC 1.B.3) family. As to quaternary structure, homotrimer formed of three 18-stranded antiparallel beta-barrels, containing three independent channels.

The protein localises to the cell outer membrane. The enzyme catalyses beta-maltose(in) = beta-maltose(out). In terms of biological role, involved in the transport of maltose and maltodextrins. This Aeromonas salmonicida (strain A449) protein is Maltoporin 1.